An 89-amino-acid chain; its full sequence is Inner kinetochore subunit mhf2 (89 aa).

Belongs to the CENP-X/MHF2 family. The MHF histone-fold complex is a heterotetramer of 2 mhf1-mhf2 heterodimers. Component of the inner kinetochore constitutive centromere-associated network (CCAN) (also known as central kinetochore Sim4 complex in fission yeast), which is composed of at least cnl2, cnp3, cnp20, fta1, fta2, fta3, fta4, fta6, fta7, mal2, mhf1, mhf2, mis6, mis15, mis17, sim4 and wip1.

The protein localises to the nucleus. The protein resides in the cytoplasm. Its function is as follows. Component of a FANCM-MHF complex that promotes gene conversion at blocked replication forks, probably by reversal of the stalled fork. FANCM-MHF promotes non-crossover recombination. The chain is Inner kinetochore subunit mhf2 from Schizosaccharomyces pombe (strain 972 / ATCC 24843) (Fission yeast).